A 556-amino-acid polypeptide reads, in one-letter code: 2-isopropylmalate synthase (556 aa).

Positions 33–307 (PIWCSSDLRD…NPGLDFSDID (275 aa)) constitute a Pyruvate carboxyltransferase domain. The Mg(2+) site is built by D42, H246, H248, and N282. The segment at 439-556 (ANVPYALISH…SLSQTQAKAA (118 aa)) is regulatory domain.

Belongs to the alpha-IPM synthase/homocitrate synthase family. LeuA type 2 subfamily. In terms of assembly, homodimer. Mg(2+) serves as cofactor.

Its subcellular location is the cytoplasm. It carries out the reaction 3-methyl-2-oxobutanoate + acetyl-CoA + H2O = (2S)-2-isopropylmalate + CoA + H(+). The protein operates within amino-acid biosynthesis; L-leucine biosynthesis; L-leucine from 3-methyl-2-oxobutanoate: step 1/4. Its function is as follows. Catalyzes the condensation of the acetyl group of acetyl-CoA with 3-methyl-2-oxobutanoate (2-ketoisovalerate) to form 3-carboxy-3-hydroxy-4-methylpentanoate (2-isopropylmalate). This chain is 2-isopropylmalate synthase, found in Pseudomonas syringae pv. syringae (strain B728a).